The following is an 806-amino-acid chain: Minor extracellular protease Vpr (806 aa).

The first 28 residues, methionine 1 to alanine 28, serve as a signal peptide directing secretion. A propeptide spanning residues alanine 29–glutamine 160 is cleaved from the precursor. One can recognise an Inhibitor I9 domain in the interval threonine 57–threonine 142. Residues serine 158–aspartate 597 form the Peptidase S8 domain. Active-site charge relay system residues include aspartate 189 and histidine 233. The PA domain maps to glutamate 383–leucine 461. Serine 534 serves as the catalytic Charge relay system.

This sequence belongs to the peptidase S8 family. Probably undergoes C-terminal processing or proteolysis. Auto-processed to form active enzymes of several different molecular weights.

The protein localises to the secreted. It is found in the cell wall. Its activity is regulated as follows. Activity is inhibited by phenylmethylsulfonyl fluoride (PMSF), but not by EDTA. In terms of biological role, serine protease. Involved in the production of the competence and sporulation stimulating factor CSF. Is directly involved in the processing of pro-CSF to CSF. Can also cleave pro-PhrA to PhrA, but cannot cleave pro-PhrE. Shows fibrinolytic activity in vitro. Not essential for growth or sporulation. The sequence is that of Minor extracellular protease Vpr from Bacillus subtilis (strain 168).